A 170-amino-acid chain; its full sequence is Adenine phosphoribosyltransferase (170 aa).

This sequence belongs to the purine/pyrimidine phosphoribosyltransferase family. In terms of assembly, homodimer.

It localises to the cytoplasm. The enzyme catalyses AMP + diphosphate = 5-phospho-alpha-D-ribose 1-diphosphate + adenine. It functions in the pathway purine metabolism; AMP biosynthesis via salvage pathway; AMP from adenine: step 1/1. Catalyzes a salvage reaction resulting in the formation of AMP, that is energically less costly than de novo synthesis. This Streptococcus sanguinis (strain SK36) protein is Adenine phosphoribosyltransferase.